Reading from the N-terminus, the 116-residue chain is Ribosome-binding factor A (116 aa).

The protein belongs to the RbfA family. In terms of assembly, monomer. Binds 30S ribosomal subunits, but not 50S ribosomal subunits or 70S ribosomes.

The protein resides in the cytoplasm. Functionally, one of several proteins that assist in the late maturation steps of the functional core of the 30S ribosomal subunit. Associates with free 30S ribosomal subunits (but not with 30S subunits that are part of 70S ribosomes or polysomes). Required for efficient processing of 16S rRNA. May interact with the 5'-terminal helix region of 16S rRNA. The polypeptide is Ribosome-binding factor A (Clostridium perfringens (strain 13 / Type A)).